Reading from the N-terminus, the 132-residue chain is Small ribosomal subunit protein eS6 (132 aa).

This sequence belongs to the eukaryotic ribosomal protein eS6 family.

This is Small ribosomal subunit protein eS6 from Methanoculleus marisnigri (strain ATCC 35101 / DSM 1498 / JR1).